The following is a 201-amino-acid chain: Ubiquinone biosynthesis accessory factor UbiJ (201 aa).

An SCP2 domain is found at 15 to 112 (LNTFLYRSPA…QVVQNFVALA (98 aa)).

Belongs to the UbiJ family.

The protein localises to the cytoplasm. The protein operates within cofactor biosynthesis; ubiquinone biosynthesis. In terms of biological role, required for ubiquinone (coenzyme Q) biosynthesis under aerobic conditions. Binds hydrophobic ubiquinone biosynthetic intermediates via its SCP2 domain and is essential for the stability of the Ubi complex. May constitute a docking platform where Ubi enzymes assemble and access their SCP2-bound polyprenyl substrates. Required for intracellular proliferation in macrophages. This Salmonella typhimurium (strain LT2 / SGSC1412 / ATCC 700720) protein is Ubiquinone biosynthesis accessory factor UbiJ.